We begin with the raw amino-acid sequence, 409 residues long: Argininosuccinate synthase (409 aa).

ATP contacts are provided by residues 16–24 (AYSGGLDTS) and A44. The L-citrulline site is built by Y96 and S101. ATP is bound at residue G126. L-aspartate-binding residues include T128, N132, and D133. Position 132 (N132) interacts with L-citrulline. L-citrulline-binding residues include R136, S185, S194, E270, and Y282.

Belongs to the argininosuccinate synthase family. Type 1 subfamily. As to quaternary structure, homotetramer.

Its subcellular location is the cytoplasm. The enzyme catalyses L-citrulline + L-aspartate + ATP = 2-(N(omega)-L-arginino)succinate + AMP + diphosphate + H(+). It participates in amino-acid biosynthesis; L-arginine biosynthesis; L-arginine from L-ornithine and carbamoyl phosphate: step 2/3. The protein is Argininosuccinate synthase of Shewanella piezotolerans (strain WP3 / JCM 13877).